Consider the following 127-residue polypeptide: MRHRKSGRQLNRNSSHRQAMFRNMAGSLVRHEIIKTTLPKAKELRRVVEPLITLAKTDSVANRRLAFARTRDNEIVAKLFNELGPRFASRAGGYTRILKCGFRAGDNAPMAYIELVDRSEKAEAAAE.

It belongs to the bacterial ribosomal protein bL17 family. As to quaternary structure, part of the 50S ribosomal subunit. Contacts protein L32.

In Escherichia fergusonii (strain ATCC 35469 / DSM 13698 / CCUG 18766 / IAM 14443 / JCM 21226 / LMG 7866 / NBRC 102419 / NCTC 12128 / CDC 0568-73), this protein is Large ribosomal subunit protein bL17.